The following is a 205-amino-acid chain: uncharacterized protein (205 aa).

This is an uncharacterized protein from Caenorhabditis elegans.